Consider the following 204-residue polypeptide: MKVVAFERQQQGTGASRRLRNAGKTTGIVYGGEAAPQMIELDHNALWHALKKEAFHSSILDLEVAGKSQRVLLRDVQYHPFRQLVLHVDFQRIDPKKKLHTKAPLHFLNAETSPAVKLSSAVVSHVVTEIEIECLPADLPEFLEVDLSKIEAGQSLHAKDIALPNGVALTAHVDAENPVIASATIPAGAVSDEAAAGEGETPAA.

Belongs to the bacterial ribosomal protein bL25 family. CTC subfamily. In terms of assembly, part of the 50S ribosomal subunit; part of the 5S rRNA/L5/L18/L25 subcomplex. Contacts the 5S rRNA. Binds to the 5S rRNA independently of L5 and L18.

Functionally, this is one of the proteins that binds to the 5S RNA in the ribosome where it forms part of the central protuberance. In Burkholderia mallei (strain NCTC 10247), this protein is Large ribosomal subunit protein bL25.